Reading from the N-terminus, the 347-residue chain is 3,4-dihydroxy-2-butanone 4-phosphate synthase (347 aa).

A DHBP synthase region spans residues 1–200 (MPLNRVREAI…ISDLIEYRMQ (200 aa)). D-ribulose 5-phosphate contacts are provided by residues 27–28 (RE), Asp-32, 139–143 (RTGHT), and Glu-163. Glu-28 is a binding site for Mg(2+). His-142 provides a ligand contact to Mg(2+). The tract at residues 201–347 (NEMLILIKER…IVLQGGPIQL (147 aa)) is GTP cyclohydrolase II-like.

It in the N-terminal section; belongs to the DHBP synthase family. In the C-terminal section; belongs to the GTP cyclohydrolase II family. Mg(2+) serves as cofactor. Mn(2+) is required as a cofactor.

It catalyses the reaction D-ribulose 5-phosphate = (2S)-2-hydroxy-3-oxobutyl phosphate + formate + H(+). The protein operates within cofactor biosynthesis; riboflavin biosynthesis; 2-hydroxy-3-oxobutyl phosphate from D-ribulose 5-phosphate: step 1/1. Functionally, catalyzes the conversion of D-ribulose 5-phosphate to formate and 3,4-dihydroxy-2-butanone 4-phosphate. This chain is 3,4-dihydroxy-2-butanone 4-phosphate synthase (ribB), found in Wolinella succinogenes (strain ATCC 29543 / DSM 1740 / CCUG 13145 / JCM 31913 / LMG 7466 / NCTC 11488 / FDC 602W) (Vibrio succinogenes).